The chain runs to 219 residues: 7-methyl-GTP pyrophosphatase (219 aa).

The Proton acceptor role is filled by aspartate 89.

It belongs to the Maf family. YceF subfamily. It depends on a divalent metal cation as a cofactor.

Its subcellular location is the cytoplasm. It catalyses the reaction N(7)-methyl-GTP + H2O = N(7)-methyl-GMP + diphosphate + H(+). In terms of biological role, nucleoside triphosphate pyrophosphatase that hydrolyzes 7-methyl-GTP (m(7)GTP). May have a dual role in cell division arrest and in preventing the incorporation of modified nucleotides into cellular nucleic acids. The sequence is that of 7-methyl-GTP pyrophosphatase from Polaromonas sp. (strain JS666 / ATCC BAA-500).